Here is an 862-residue protein sequence, read N- to C-terminus: MEPVSHQGMPRLSWIDTLYSNFNYGTDGYDAEGNEEHKSSREGSETMPYIDESPTMSPQLSARSQDSVDGVSPTPTEVLLPGGESESDKGLLMRKLVLSGVLASEEIYINQLEALLLPMKPLKATASTSQPVLTLQQINDIFYKIEDIYQMHKDFYDKLCPIVLQFDNKTTVGHLFQKLASQLGVYKAFVDNYKFALETAEKCSQCNVQFFKISEDLKVKGPKDSKEQPQSVTMEALLYKPIDRVTRSTLVLHDLLKHTPTDHPDYPLLQDALRISQNFLSSINEDIDPRRTAVTTPKGEPRQLVKDGFLVELSENSRKLRHLFLFTDLLLCAKLKKTTVGKHQQYDCKWYIPLADLVFPSPEESEPIPQLHATPDHEIEEMKAKISVLKSEIQKERKSNKGSSRTIERLKKKMFEYESWLLLYSPTIPFRIHNKNGKSYFFLLSSDYERSEWREAIQKLQKKDLQALALSPFELQVLTASCFKLRTVHNVPIISHKDDDESPGLYGFLHVIVKSAKGFSHSSNLYCTLEVDSFGYFVSKAKTRVFRDTTEPEWNEEFEIELEGSQCLRILCYEKCYDKSKLNKDNNEIVDKIMGKGQIQLDPQVVQSKNWHDDVIEMNGIKVEFSMKFSSRDMSLKRTPSKKQTGVFGVKISVVTKRERSKVPYIVRQCIEEVEKRGIEEVGIYRISGVATDIQALKASFDANSKDILMMLSDMDINAIAGTLKLYFRELPEPLLTDRLYLAFMEGIALSDPAAKENCMMHLLRSLPDPNLMTFLFLLQHLKRVAEKEPINKMSLHNLATVFGPTLLRPSEVESKGHMNLASDIWSHDVMAQVQVLLYYLQHPPISFSELKRSTLYYSTDV.

The disordered stretch occupies residues 30 to 84 (DAEGNEEHKSSREGSETMPYIDESPTMSPQLSARSQDSVDGVSPTPTEVLLPGGE). Over residues 34–44 (NEEHKSSREGS) the composition is skewed to basic and acidic residues. Residues 54-67 (PTMSPQLSARSQDS) are compositionally biased toward polar residues. One can recognise a DH domain in the interval 93–286 (MRKLVLSGVL…QNFLSSINED (194 aa)). In terms of domain architecture, PH spans 303-462 (QLVKDGFLVE…WREAIQKLQK (160 aa)). In terms of domain architecture, C2 spans 488–616 (VHNVPIISHK…QSKNWHDDVI (129 aa)). The region spanning 650 to 848 (VKISVVTKRE…YYLQHPPISF (199 aa)) is the Rho-GAP domain.

The protein resides in the cell projection. The protein localises to the dendritic spine. It is found in the axon. Its subcellular location is the synapse. In terms of biological role, protein with a unique structure having two opposing regulatory activities toward small GTP-binding proteins. The C-terminus is a GTPase-activating protein domain which stimulates GTP hydrolysis by RAC1, RAC2 and CDC42. Accelerates the intrinsic rate of GTP hydrolysis of RAC1 or CDC42, leading to down-regulation of the active GTP-bound form. The central Dbl homology (DH) domain functions as guanine nucleotide exchange factor (GEF) that modulates the GTPases CDC42, RHOA and RAC1. Promotes the conversion of CDC42, RHOA and RAC1 from the GDP-bound to the GTP-bound form. In Xenopus tropicalis (Western clawed frog), this protein is Active breakpoint cluster region-related protein (abr).